The following is a 101-amino-acid chain: Putative pterin-4-alpha-carbinolamine dehydratase (101 aa).

It belongs to the pterin-4-alpha-carbinolamine dehydratase family.

It catalyses the reaction (4aS,6R)-4a-hydroxy-L-erythro-5,6,7,8-tetrahydrobiopterin = (6R)-L-erythro-6,7-dihydrobiopterin + H2O. The polypeptide is Putative pterin-4-alpha-carbinolamine dehydratase (Rhizobium leguminosarum bv. trifolii (strain WSM2304)).